The chain runs to 642 residues: MEERGSPDGDPARNLEQGPEGSETPIQVVLRVRPMSTVELRRGEQSALHCSGTRTLQVSPDVAFRFGAVLDGARTQEDVFRACGVKRLGELALRGFSCTVFTFGQTGSGKTYTLTGPPPQGEGVPVPPSLAGIMQRTFTWLLDRVQHLDSPVTLRASYLEIYNEQVWDLLSLGSPRPLPVRWTKARGFYVEQLRVVEFGSLEALMELLQMGLSRRRSSSHTLNQASSRSHALLTLHISRPTSQQVPPVDLGEPPVGGKLCFVDLAGSEKVAATGSQGQLMLEANSINRSLLALGHCISLLLDPQRKQNHIPFRDSKLTKLLADSLGGRGVTLMVACVSPSAQCLPETLSTLRYASRAQRITTRPQGPKSPGVKPPQQVENELLRLQEENRHLRFQLDQMHTTAPGAHGARMAWAQRNLYGMLQEFMLENERLRKEMRQLRSSRDLARAEQRVLAQQVHDLERRLLSACPLPQQGSTPVCPCRMVPAASCHALPPLCYCHHFCPLCRVPLAHWTCPRRECHMPQVLEPEAPGHISQSVWPPPWAPPPSPGSAKPPRERSQSDWTQTRVLAEMLMGEEVVPSAPPLSAGPSNMPYGLRGGSGIPNLTPRLETLTQQINSSLHLSQRQPQPSEDTQSPGQGLSSC.

The segment covering 1 to 13 (MEERGSPDGDPAR) has biased composition (basic and acidic residues). The disordered stretch occupies residues 1–25 (MEERGSPDGDPARNLEQGPEGSETP). Position 6 is a phosphoserine (Ser-6). The Kinesin motor domain occupies 25–360 (PIQVVLRVRP…LRYASRAQRI (336 aa)). Residue 104–111 (GQTGSGKT) coordinates ATP. Ser-369 is modified (phosphoserine). A coiled-coil region spans residues 376–465 (QQVENELLRL…QVHDLERRLL (90 aa)). Disordered regions lie at residues 531-561 (GHIS…SQSD) and 579-642 (PSAP…LSSC). Pro residues predominate over residues 538-548 (WPPPWAPPPSP). Polar residues predominate over residues 610–642 (TLTQQINSSLHLSQRQPQPSEDTQSPGQGLSSC). Residue Ser-634 is modified to Phosphoserine.

Belongs to the TRAFAC class myosin-kinesin ATPase superfamily. Kinesin family. Expressed in the liver.

It localises to the cytoplasm. It is found in the cytoskeleton. In Mus musculus (Mouse), this protein is Kinesin-like protein KIF12 (Kif12).